The chain runs to 130 residues: Histone H2A.6 (130 aa).

A compositionally biased stretch (gly residues) spans 1 to 12 (MAGRGKTLGSGG). The disordered stretch occupies residues 1-23 (MAGRGKTLGSGGAKKATSRSSKA).

It belongs to the histone H2A family. In terms of assembly, the nucleosome is a histone octamer containing two molecules each of H2A, H2B, H3 and H4 assembled in one H3-H4 heterotetramer and two H2A-H2B heterodimers. The octamer wraps approximately 147 bp of DNA. Interacts with VIP1. Not ubiquitinated. Low level of expression, mainly in dividing tissues: floral buds, margins of newly emerging leaves, expanding leaves and the meristematic zone of root tips. Also expressed in many non-dividing cells of the elongation zone of the root.

The protein resides in the nucleus. It localises to the chromosome. In terms of biological role, core component of nucleosome. Nucleosomes wrap and compact DNA into chromatin, limiting DNA accessibility to the cellular machineries which require DNA as a template. Histones thereby play a central role in transcription regulation, DNA repair, DNA replication and chromosomal stability. DNA accessibility is regulated via a complex set of post-translational modifications of histones, also called histone code, and nucleosome remodeling. Required for the T-DNA integration step of plant transformation by Agrobacterium. May play an important role in illegitimate recombination. This chain is Histone H2A.6 (RAT5), found in Arabidopsis thaliana (Mouse-ear cress).